Reading from the N-terminus, the 142-residue chain is HTH-type transcriptional regulator LrpA1 (142 aa).

Positions 1 to 72 (MSTESTEERI…GQSIAMVGID (72 aa)) constitute an HTH asnC-type domain. The H-T-H motif DNA-binding region spans 22–41 (YAAIAERADVSKPTVRKYID).

Transcription factor that regulates genes involved in amino acid metabolism. Represses the aspB3 gene, coding for an aspartate transaminase, in the presence of L-aspartate. Another target gene is the basal transcriptional regulator tfbB. Also binds its own promoter. This Halobacterium salinarum (strain ATCC 29341 / DSM 671 / R1) protein is HTH-type transcriptional regulator LrpA1 (lrpA1).